Reading from the N-terminus, the 129-residue chain is Histone H2A-IV (129 aa).

A disordered region spans residues Met-1–Ala-22. Ser-2 is modified (N-acetylserine). At Ser-2 the chain carries Phosphoserine. Lys-6 is subject to N6-(2-hydroxyisobutyryl)lysine. N6-acetyllysine is present on residues Lys-6 and Lys-10. The segment covering Gln-7–Ser-19 has biased composition (basic residues). Lys-10 is subject to N6-(2-hydroxyisobutyryl)lysine; alternate. The residue at position 10 (Lys-10) is an N6-lactoyllysine; alternate. The residue at position 10 (Lys-10) is an N6-succinyllysine. Residues Lys-14 and Lys-16 each participate in a glycyl lysine isopeptide (Lys-Gly) (interchain with G-Cter in ubiquitin) cross-link. An N6-(2-hydroxyisobutyryl)lysine; alternate modification is found at Lys-37. 2 positions are modified to N6-(2-hydroxyisobutyryl)lysine: Lys-75 and Lys-76. N6-(2-hydroxyisobutyryl)lysine; alternate is present on Lys-96. Lys-96 is modified (N6-succinyllysine). Lys-96 bears the N6-glutaryllysine; alternate mark. Position 100 is an N6-glutaryllysine (Lys-100). The residue at position 105 (Gln-105) is an N5-methylglutamine. Lys-119 carries the N6-(2-hydroxyisobutyryl)lysine; alternate modification. N6-glutaryllysine; alternate is present on residues Lys-119 and Lys-120. Lys-120 participates in a covalent cross-link: Glycyl lysine isopeptide (Lys-Gly) (interchain with G-Cter in ubiquitin).

The protein belongs to the histone H2A family. As to quaternary structure, the nucleosome is a histone octamer containing two molecules each of H2A, H2B, H3 and H4 assembled in one H3-H4 heterotetramer and two H2A-H2B heterodimers. The octamer wraps approximately 147 bp of DNA. In terms of processing, monoubiquitination of Lys-120 (H2AK119Ub) gives a specific tag for epigenetic transcriptional repression. Following DNA double-strand breaks (DSBs), it is ubiquitinated through 'Lys-63' linkage of ubiquitin moieties, leading to the recruitment of repair proteins to sites of DNA damage. H2AK119Ub and ionizing radiation-induced 'Lys-63'-linked ubiquitination are distinct events. Post-translationally, phosphorylation on Ser-2 is enhanced during mitosis. Phosphorylation on Ser-2 directly represses transcription. Glutamine methylation at Gln-105 (H2AQ104me) by FBL is specifically dedicated to polymerase I. It is present at 35S ribosomal DNA locus and impairs binding of the FACT complex.

The protein resides in the nucleus. The protein localises to the chromosome. Its function is as follows. Core component of nucleosome. Nucleosomes wrap and compact DNA into chromatin, limiting DNA accessibility to the cellular machineries which require DNA as a template. Histones thereby play a central role in transcription regulation, DNA repair, DNA replication and chromosomal stability. DNA accessibility is regulated via a complex set of post-translational modifications of histones, also called histone code, and nucleosome remodeling. The sequence is that of Histone H2A-IV from Gallus gallus (Chicken).